The chain runs to 265 residues: Polyphosphate glucokinase (265 aa).

Positions 1 to 18 (MTSTGPETSETPGATTQR) are enriched in polar residues. The segment at 1–22 (MTSTGPETSETPGATTQRHGFG) is disordered. Residue 24–29 (DVGGSG) coordinates ATP.

Belongs to the ROK (NagC/XylR) family. As to quaternary structure, homodimer.

The enzyme catalyses [phosphate](n) + D-glucose = [phosphate](n-1) + D-glucose 6-phosphate + H(+). It carries out the reaction D-glucose + ATP = D-glucose 6-phosphate + ADP + H(+). Catalyzes the phosphorylation of glucose using polyphosphate or ATP as the phosphoryl donor. Polyphosphate, rather than ATP, seems to be the major phosphate donor for the enzyme in M.tuberculosis. GTP, UTP and CTP can replace ATP as phosphoryl donor. The chain is Polyphosphate glucokinase (ppgK) from Mycobacterium tuberculosis (strain ATCC 25177 / H37Ra).